The following is a 369-amino-acid chain: UDP-3-O-acylglucosamine N-acyltransferase (369 aa).

Histidine 263 (proton acceptor) is an active-site residue.

Belongs to the transferase hexapeptide repeat family. LpxD subfamily. Homotrimer.

It catalyses the reaction a UDP-3-O-[(3R)-3-hydroxyacyl]-alpha-D-glucosamine + a (3R)-hydroxyacyl-[ACP] = a UDP-2-N,3-O-bis[(3R)-3-hydroxyacyl]-alpha-D-glucosamine + holo-[ACP] + H(+). Its pathway is bacterial outer membrane biogenesis; LPS lipid A biosynthesis. Functionally, catalyzes the N-acylation of UDP-3-O-acylglucosamine using 3-hydroxyacyl-ACP as the acyl donor. Is involved in the biosynthesis of lipid A, a phosphorylated glycolipid that anchors the lipopolysaccharide to the outer membrane of the cell. The sequence is that of UDP-3-O-acylglucosamine N-acyltransferase from Burkholderia vietnamiensis (strain G4 / LMG 22486) (Burkholderia cepacia (strain R1808)).